Here is a 244-residue protein sequence, read N- to C-terminus: Meiotic drive suppressor wtf2 (244 aa).

Positions 1–10 are enriched in polar residues; sequence MKNNYTSLKS. Residues 1–68 are disordered; it reads MKNNYTSLKS…RENNPSRSTD (68 aa). Over residues 17–30 the composition is skewed to basic and acidic residues; sequence ELKTDHEIDLEKGP. A run of 4 helical transmembrane segments spans residues 73–93, 110–130, 149–169, and 183–203; these read FLIK…LAIC, WTLF…LTYF, WENM…VGSP, and LKWS…VFIA.

The protein belongs to the WTF family. Homomer. Interacts with other proteins that exhibit high sequence similarity.

It is found in the spore membrane. It localises to the vacuole membrane. Functionally, acts as a suppressor component of the dual wtf meiotic drive system, and can suppress but not confer meiotic drive by compatible poisons. Wtf meiotic drive systems promote unequal transmission of alleles from the parental zygote to progeny spores by encoding a poison and an antidote from the same locus; the poison is trans-acting and forms toxic aggregates in all spores within an ascus, wherease the antidote is spore-specific and targets aggregates for degradation by the vacuole. Meiotic drive by wtf systems therefore lead to poisoning of all progeny that do not inherit the dual poison/antidote allele, or express a compatible antidote. The sequence is that of Meiotic drive suppressor wtf2 from Schizosaccharomyces kambucha (Fission yeast).